Consider the following 271-residue polypeptide: Formamidopyrimidine-DNA glycosylase (271 aa).

P2 acts as the Schiff-base intermediate with DNA in catalysis. E3 functions as the Proton donor in the catalytic mechanism. Catalysis depends on K58, which acts as the Proton donor; for beta-elimination activity. DNA contacts are provided by H92, R111, and R152. Residues 237–271 (YVYGKVQKPCRICNNIITLIRQNGRSTYFCNACQN) form an FPG-type zinc finger. The Proton donor; for delta-elimination activity role is filled by R261.

It belongs to the FPG family. Monomer. The cofactor is Zn(2+).

The enzyme catalyses Hydrolysis of DNA containing ring-opened 7-methylguanine residues, releasing 2,6-diamino-4-hydroxy-5-(N-methyl)formamidopyrimidine.. It carries out the reaction 2'-deoxyribonucleotide-(2'-deoxyribose 5'-phosphate)-2'-deoxyribonucleotide-DNA = a 3'-end 2'-deoxyribonucleotide-(2,3-dehydro-2,3-deoxyribose 5'-phosphate)-DNA + a 5'-end 5'-phospho-2'-deoxyribonucleoside-DNA + H(+). Its function is as follows. Involved in base excision repair of DNA damaged by oxidation or by mutagenic agents. Acts as a DNA glycosylase that recognizes and removes damaged bases. Has a preference for oxidized purines, such as 7,8-dihydro-8-oxoguanine (8-oxoG). Has AP (apurinic/apyrimidinic) lyase activity and introduces nicks in the DNA strand. Cleaves the DNA backbone by beta-delta elimination to generate a single-strand break at the site of the removed base with both 3'- and 5'-phosphates. This Wolbachia pipientis subsp. Culex pipiens (strain wPip) protein is Formamidopyrimidine-DNA glycosylase.